A 149-amino-acid polypeptide reads, in one-letter code: Ribonuclease H (149 aa).

Residues 1–143 enclose the RNase H type-1 domain; the sequence is MNQVVIYTDG…ADALANKGVD (143 aa). 4 residues coordinate Mg(2+): Asp9, Glu47, Asp69, and Asp135.

The protein belongs to the RNase H family. Monomer. Mg(2+) serves as cofactor.

It localises to the cytoplasm. The catalysed reaction is Endonucleolytic cleavage to 5'-phosphomonoester.. Functionally, endonuclease that specifically degrades the RNA of RNA-DNA hybrids. The protein is Ribonuclease H of Paracidovorax citrulli (strain AAC00-1) (Acidovorax citrulli).